Reading from the N-terminus, the 574-residue chain is Peptidyl-prolyl cis-trans isomerase FKBP9 (574 aa).

The N-terminal stretch at methionine 1 to alanine 26 is a signal peptide. PPIase FKBP-type domains follow at residues glycine 58–tryptophan 146, serine 170–histidine 258, glycine 282–histidine 369, and glycine 393–valine 481. Asparagine 178, asparagine 290, asparagine 306, and asparagine 401 each carry an N-linked (GlcNAc...) asparagine glycan. EF-hand domains follow at residues tryptophan 492 to serine 527 and aspartate 537 to aspartate 572. Ca(2+)-binding residues include aspartate 505, aspartate 507, aspartate 509, glutamate 511, glutamate 516, aspartate 550, asparagine 552, aspartate 554, lysine 556, and glutamate 561. Positions histidine 571–leucine 574 match the Prevents secretion from ER motif.

Post-translationally, phosphorylated.

It is found in the endoplasmic reticulum. The catalysed reaction is [protein]-peptidylproline (omega=180) = [protein]-peptidylproline (omega=0). Inhibited by FK506. PPIases accelerate the folding of proteins during protein synthesis. This Bos taurus (Bovine) protein is Peptidyl-prolyl cis-trans isomerase FKBP9 (FKBP9).